A 205-amino-acid chain; its full sequence is Phosphoheptose isomerase (205 aa).

Residues 38–200 enclose the SIS domain; the sequence is LAVRLALGSK…LFEAVGELEP (163 aa). Substrate is bound at residue 53–55; the sequence is NGG. Zn(2+) is bound by residues H62 and E66. Substrate-binding positions include E66, 95–96, 121–123, S126, and Q173; these read ND and STS. Residues Q173 and H181 each contribute to the Zn(2+) site.

This sequence belongs to the SIS family. GmhA subfamily. Homotetramer. Zn(2+) serves as cofactor.

The protein localises to the cytoplasm. It catalyses the reaction 2 D-sedoheptulose 7-phosphate = D-glycero-alpha-D-manno-heptose 7-phosphate + D-glycero-beta-D-manno-heptose 7-phosphate. Its pathway is carbohydrate biosynthesis; D-glycero-D-manno-heptose 7-phosphate biosynthesis; D-glycero-alpha-D-manno-heptose 7-phosphate and D-glycero-beta-D-manno-heptose 7-phosphate from sedoheptulose 7-phosphate: step 1/1. In terms of biological role, catalyzes the isomerization of sedoheptulose 7-phosphate in D-glycero-D-manno-heptose 7-phosphate. The chain is Phosphoheptose isomerase from Maridesulfovibrio salexigens (strain ATCC 14822 / DSM 2638 / NCIMB 8403 / VKM B-1763) (Desulfovibrio salexigens).